Consider the following 373-residue polypeptide: Type 2 DNA topoisomerase 6 subunit A (373 aa).

One can recognise a Topo IIA-type catalytic domain in the interval Gln15 to Ala153. Tyr110 functions as the O-(5'-phospho-DNA)-tyrosine intermediate in the catalytic mechanism. Mg(2+) contacts are provided by Glu206 and Asp258.

It belongs to the TOP6A family. As to quaternary structure, homodimer. Heterotetramer of two Top6A and two Top6B chains. The cofactor is Mg(2+).

The catalysed reaction is ATP-dependent breakage, passage and rejoining of double-stranded DNA.. Its function is as follows. Relaxes both positive and negative superturns and exhibits a strong decatenase activity. This Methanosarcina acetivorans (strain ATCC 35395 / DSM 2834 / JCM 12185 / C2A) protein is Type 2 DNA topoisomerase 6 subunit A.